The chain runs to 70 residues: DNA-directed RNA polymerase subunit omega (70 aa).

It belongs to the RNA polymerase subunit omega family. The RNAP catalytic core consists of 2 alpha, 1 beta, 1 beta' and 1 omega subunit. When a sigma factor is associated with the core the holoenzyme is formed, which can initiate transcription.

The catalysed reaction is RNA(n) + a ribonucleoside 5'-triphosphate = RNA(n+1) + diphosphate. Promotes RNA polymerase assembly. Latches the N- and C-terminal regions of the beta' subunit thereby facilitating its interaction with the beta and alpha subunits. The sequence is that of DNA-directed RNA polymerase subunit omega from Marinobacter nauticus (strain ATCC 700491 / DSM 11845 / VT8) (Marinobacter aquaeolei).